The chain runs to 218 residues: Thiopurine S-methyltransferase (218 aa).

Positions 10, 45, 66, and 123 each coordinate S-adenosyl-L-methionine.

Belongs to the class I-like SAM-binding methyltransferase superfamily. TPMT family.

The protein localises to the cytoplasm. It carries out the reaction S-adenosyl-L-methionine + a thiopurine = S-adenosyl-L-homocysteine + a thiopurine S-methylether.. This is Thiopurine S-methyltransferase from Shewanella oneidensis (strain ATCC 700550 / JCM 31522 / CIP 106686 / LMG 19005 / NCIMB 14063 / MR-1).